A 221-amino-acid chain; its full sequence is UPF0502 protein Sputcn32_1644 (221 aa).

Belongs to the UPF0502 family.

This Shewanella putrefaciens (strain CN-32 / ATCC BAA-453) protein is UPF0502 protein Sputcn32_1644.